The sequence spans 837 residues: V-type proton ATPase 116 kDa subunit a 1 (837 aa).

At 1–388 (MGELFRSEEM…DAYGIGSYRE (388 aa)) the chain is on the cytoplasmic side. The chain crosses the membrane as a helical span at residues 389-407 (INPAPYTIITFPFLFAVMF). Residues 408–409 (GD) are Vacuolar-facing. A helical transmembrane segment spans residues 410–426 (FGHGILMTLFAVWMVVR). Over 427-441 (ESRILSQKIDNELFT) the chain is Cytoplasmic. A helical membrane pass occupies residues 442–471 (MMFSGRYIILLMGLFSIYTGLIYNDCFSKA). Residues 472 to 534 (LNLFGSSWSV…ATNKLTFLNS (63 aa)) are Vacuolar-facing. The chain crosses the membrane as a helical span at residues 535-554 (FKMKMSVVLGIIHMTFGVAL). At 555 to 572 (SLLNHIYFKKPLNIYLGF) the chain is on the cytoplasmic side. A helical transmembrane segment spans residues 573–593 (IPEMIFMTTLFGYLVILIIYK). Topologically, residues 594–638 (WCAYDASTSMVAPSLLIHFINMFLFSYQDTSLPMLYKGQMGLQCF) are vacuolar. The helical transmembrane segment at 639–658 (LVVCAIICVPWMLVVKPLIL) threads the bilayer. The Cytoplasmic segment spans residues 659-724 (RRQYLRRKHL…DTVVHQAIHT (66 aa)). Residues 725 to 749 (IEYCLGCISNTASYLRLWALSLAHA) traverse the membrane as a helical segment. Topologically, residues 750–770 (QLSEVLWTMVMHVGLSIRSLG) are vacuolar. The chain crosses the membrane as a helical span at residues 771-809 (GGIALVFVFSAFATLTIAILLIMEGLSAFLHALRLHWVE). The Cytoplasmic portion of the chain corresponds to 810–837 (FQNKFYMGTGFKFLPFSFENIREGKFDE).

It belongs to the V-ATPase 116 kDa subunit family. As to quaternary structure, V-ATPase is a heteromultimeric enzyme made up of two complexes: the ATP-hydrolytic V1 complex and the proton translocation V0 complex. The V1 complex consists of three catalytic AB heterodimers that form a heterohexamer, three peripheral stalks each consisting of EG heterodimers, one central rotor including subunits D and F, and the regulatory subunits C and H. The proton translocation complex V0 consists of the proton transport subunit a, a ring of proteolipid subunits c9c'', rotary subunit d, subunits e and f, and two accessory subunits.

It localises to the cytoplasmic vesicle. Its subcellular location is the clathrin-coated vesicle membrane. The protein localises to the secretory vesicle. It is found in the synaptic vesicle membrane. The protein resides in the melanosome. Functionally, subunit of the V0 complex of vacuolar(H+)-ATPase (V-ATPase), a multisubunit enzyme composed of a peripheral complex (V1) that hydrolyzes ATP and a membrane integral complex (V0) that translocates protons. V-ATPase is responsible for acidifying and maintaining the pH of intracellular compartments and in some cell types, is targeted to the plasma membrane, where it is responsible for acidifying the extracellular environment. Required for assembly and activity of the vacuolar ATPase. This Xenopus tropicalis (Western clawed frog) protein is V-type proton ATPase 116 kDa subunit a 1 (atp6v0a1).